A 402-amino-acid polypeptide reads, in one-letter code: 1-deoxy-D-xylulose 5-phosphate reductoisomerase (402 aa).

NADPH-binding residues include Thr21, Gly22, Ser23, Ile24, Gly47, Asn50, and Asn127. Position 128 (Lys128) interacts with 1-deoxy-D-xylulose 5-phosphate. An NADPH-binding site is contributed by Glu129. Residue Asp151 participates in Mn(2+) binding. Ser152, Glu153, Ser177, and His200 together coordinate 1-deoxy-D-xylulose 5-phosphate. A Mn(2+)-binding site is contributed by Glu153. Residue Gly206 coordinates NADPH. 1-deoxy-D-xylulose 5-phosphate-binding residues include Ser213, Asn218, Lys219, and Glu222. Position 222 (Glu222) interacts with Mn(2+).

This sequence belongs to the DXR family. The cofactor is Mg(2+). Requires Mn(2+) as cofactor.

It carries out the reaction 2-C-methyl-D-erythritol 4-phosphate + NADP(+) = 1-deoxy-D-xylulose 5-phosphate + NADPH + H(+). Its pathway is isoprenoid biosynthesis; isopentenyl diphosphate biosynthesis via DXP pathway; isopentenyl diphosphate from 1-deoxy-D-xylulose 5-phosphate: step 1/6. Its function is as follows. Catalyzes the NADPH-dependent rearrangement and reduction of 1-deoxy-D-xylulose-5-phosphate (DXP) to 2-C-methyl-D-erythritol 4-phosphate (MEP). The sequence is that of 1-deoxy-D-xylulose 5-phosphate reductoisomerase from Mycobacterium ulcerans (strain Agy99).